The chain runs to 144 residues: Cytochrome c oxidase subunit 4 isoform 1, mitochondrial (144 aa).

Over 1–73 (SVVKSEDYTL…SFAEMNRGSN (73 aa)) the chain is Mitochondrial matrix. Position 4 is an N6-acetyllysine; alternate (Lys-4). Lys-4 carries the N6-succinyllysine; alternate modification. Phosphoserine is present on residues Ser-31 and Ser-33. N6-acetyllysine; alternate is present on Lys-35. Position 35 is an N6-succinyllysine; alternate (Lys-35). Lys-42 is subject to N6-acetyllysine. A helical membrane pass occupies residues 74–99 (EWKTVVGAAMFFIGFTAILIMLEKRY). The Mitochondrial intermembrane segment spans residues 100 to 144 (VYGPLPHTFDKEWVAMQTKRMLDLKVNPVDGLASKWDYEKKEWKK).

The protein belongs to the cytochrome c oxidase IV family. As to quaternary structure, component of the cytochrome c oxidase (complex IV, CIV), a multisubunit enzyme composed of 14 subunits. The complex is composed of a catalytic core of 3 subunits MT-CO1, MT-CO2 and MT-CO3, encoded in the mitochondrial DNA, and 11 supernumerary subunits COX4I, COX5A, COX5B, COX6A, COX6B, COX6C, COX7A, COX7B, COX7C, COX8 and NDUFA4, which are encoded in the nuclear genome. The complex exists as a monomer or a dimer and forms supercomplexes (SCs) in the inner mitochondrial membrane with NADH-ubiquinone oxidoreductase (complex I, CI) and ubiquinol-cytochrome c oxidoreductase (cytochrome b-c1 complex, complex III, CIII), resulting in different assemblies (supercomplex SCI(1)III(2)IV(1) and megacomplex MCI(2)III(2)IV(2)). Interacts with PHB2; the interaction decreases in absence of SPHK2. Interacts with AFG1L. Interacts with ABCB7; this interaction allows the regulation of cellular iron homeostasis and cellular reactive oxygen species (ROS) levels in cardiomyocytes. Interacts with FLVCR2; this interaction occurs in the absence of heme and is disrupted upon heme binding. Interacts with IRGC.

Its subcellular location is the mitochondrion inner membrane. The protein operates within energy metabolism; oxidative phosphorylation. Component of the cytochrome c oxidase, the last enzyme in the mitochondrial electron transport chain which drives oxidative phosphorylation. The respiratory chain contains 3 multisubunit complexes succinate dehydrogenase (complex II, CII), ubiquinol-cytochrome c oxidoreductase (cytochrome b-c1 complex, complex III, CIII) and cytochrome c oxidase (complex IV, CIV), that cooperate to transfer electrons derived from NADH and succinate to molecular oxygen, creating an electrochemical gradient over the inner membrane that drives transmembrane transport and the ATP synthase. Cytochrome c oxidase is the component of the respiratory chain that catalyzes the reduction of oxygen to water. Electrons originating from reduced cytochrome c in the intermembrane space (IMS) are transferred via the dinuclear copper A center (CU(A)) of subunit 2 and heme A of subunit 1 to the active site in subunit 1, a binuclear center (BNC) formed by heme A3 and copper B (CU(B)). The BNC reduces molecular oxygen to 2 water molecules using 4 electrons from cytochrome c in the IMS and 4 protons from the mitochondrial matrix. This is Cytochrome c oxidase subunit 4 isoform 1, mitochondrial (COX4I1) from Pithecia pithecia (White-faced saki).